Consider the following 751-residue polypeptide: Catalase-peroxidase 2 (751 aa).

The first 27 residues, Met1–Ala27, serve as a signal peptide directing secretion. Residues Trp115–Tyr238 constitute a cross-link (tryptophyl-tyrosyl-methioninium (Trp-Tyr) (with M-264)). His116 functions as the Proton acceptor in the catalytic mechanism. The segment at residues Tyr238–Met264 is a cross-link (tryptophyl-tyrosyl-methioninium (Tyr-Met) (with W-115)). A heme b-binding site is contributed by His279.

It belongs to the peroxidase family. Peroxidase/catalase subfamily. As to quaternary structure, homodimer or homotetramer. It depends on heme b as a cofactor. Formation of the three residue Trp-Tyr-Met cross-link is important for the catalase, but not the peroxidase activity of the enzyme.

It catalyses the reaction H2O2 + AH2 = A + 2 H2O. It carries out the reaction 2 H2O2 = O2 + 2 H2O. Its function is as follows. Bifunctional enzyme with both catalase and broad-spectrum peroxidase activity. The protein is Catalase-peroxidase 2 of Idiomarina loihiensis (strain ATCC BAA-735 / DSM 15497 / L2-TR).